The primary structure comprises 427 residues: Enolase (427 aa).

Q162 is a binding site for (2R)-2-phosphoglycerate. E204 (proton donor) is an active-site residue. Residues D241, E284, and D311 each contribute to the Mg(2+) site. (2R)-2-phosphoglycerate contacts are provided by K336, R365, S366, and K387. K336 (proton acceptor) is an active-site residue.

Belongs to the enolase family. The cofactor is Mg(2+).

The protein localises to the cytoplasm. It is found in the secreted. It localises to the cell surface. It carries out the reaction (2R)-2-phosphoglycerate = phosphoenolpyruvate + H2O. It functions in the pathway carbohydrate degradation; glycolysis; pyruvate from D-glyceraldehyde 3-phosphate: step 4/5. Its function is as follows. Catalyzes the reversible conversion of 2-phosphoglycerate (2-PG) into phosphoenolpyruvate (PEP). It is essential for the degradation of carbohydrates via glycolysis. This is Enolase from Corynebacterium kroppenstedtii (strain DSM 44385 / JCM 11950 / CIP 105744 / CCUG 35717).